Consider the following 606-residue polypeptide: Aspartate--tRNA(Asp/Asn) ligase (606 aa).

L-aspartate is bound at residue E187. The tract at residues 211–214 (QQFK) is aspartate. Residues R233 and H461 each contribute to the L-aspartate site. An ATP-binding site is contributed by 233-235 (RDE). E495 is a binding site for ATP. Position 502 (R502) interacts with L-aspartate. 547–550 (GLDR) lines the ATP pocket.

It belongs to the class-II aminoacyl-tRNA synthetase family. Type 1 subfamily. As to quaternary structure, homodimer.

The protein localises to the cytoplasm. It carries out the reaction tRNA(Asx) + L-aspartate + ATP = L-aspartyl-tRNA(Asx) + AMP + diphosphate. Functionally, aspartyl-tRNA synthetase with relaxed tRNA specificity since it is able to aspartylate not only its cognate tRNA(Asp) but also tRNA(Asn). Reaction proceeds in two steps: L-aspartate is first activated by ATP to form Asp-AMP and then transferred to the acceptor end of tRNA(Asp/Asn). This is Aspartate--tRNA(Asp/Asn) ligase from Chlorobium phaeobacteroides (strain DSM 266 / SMG 266 / 2430).